The sequence spans 359 residues: 3-dehydroquinate synthase (359 aa).

Residues 69–74 (DGEAHK), 103–107 (GVIGD), 127–128 (TT), K140, K149, and 167–170 (TLDT) each bind NAD(+). E182, H245, and H262 together coordinate Zn(2+).

This sequence belongs to the sugar phosphate cyclases superfamily. Dehydroquinate synthase family. It depends on Co(2+) as a cofactor. Zn(2+) is required as a cofactor. The cofactor is NAD(+).

It is found in the cytoplasm. The enzyme catalyses 7-phospho-2-dehydro-3-deoxy-D-arabino-heptonate = 3-dehydroquinate + phosphate. It functions in the pathway metabolic intermediate biosynthesis; chorismate biosynthesis; chorismate from D-erythrose 4-phosphate and phosphoenolpyruvate: step 2/7. Catalyzes the conversion of 3-deoxy-D-arabino-heptulosonate 7-phosphate (DAHP) to dehydroquinate (DHQ). This is 3-dehydroquinate synthase from Methylococcus capsulatus (strain ATCC 33009 / NCIMB 11132 / Bath).